The following is a 951-amino-acid chain: Bifunctional glutamine synthetase adenylyltransferase/adenylyl-removing enzyme (951 aa).

Residues 1-440 (MLPLPSELQI…VFDDLIGDET (440 aa)) are adenylyl removase. The tract at residues 449-951 (HGLYKSLWQD…WLAANDANVS (503 aa)) is adenylyl transferase.

Belongs to the GlnE family. The cofactor is Mg(2+).

It catalyses the reaction [glutamine synthetase]-O(4)-(5'-adenylyl)-L-tyrosine + phosphate = [glutamine synthetase]-L-tyrosine + ADP. It carries out the reaction [glutamine synthetase]-L-tyrosine + ATP = [glutamine synthetase]-O(4)-(5'-adenylyl)-L-tyrosine + diphosphate. In terms of biological role, involved in the regulation of glutamine synthetase GlnA, a key enzyme in the process to assimilate ammonia. When cellular nitrogen levels are high, the C-terminal adenylyl transferase (AT) inactivates GlnA by covalent transfer of an adenylyl group from ATP to specific tyrosine residue of GlnA, thus reducing its activity. Conversely, when nitrogen levels are low, the N-terminal adenylyl removase (AR) activates GlnA by removing the adenylyl group by phosphorolysis, increasing its activity. The regulatory region of GlnE binds the signal transduction protein PII (GlnB) which indicates the nitrogen status of the cell. The protein is Bifunctional glutamine synthetase adenylyltransferase/adenylyl-removing enzyme of Yersinia pseudotuberculosis serotype O:1b (strain IP 31758).